The following is a 553-amino-acid chain: Syntaxin-binding protein 4 (553 aa).

Ser-10, Ser-12, Ser-99, and Ser-212 each carry phosphoserine. The PDZ domain maps to Ala-19–Phe-105. The stretch at Ser-291–Glu-417 forms a coiled coil. Ser-463 carries the post-translational modification Phosphoserine. The WW domain occupies Asp-496–Met-529.

As to quaternary structure, interacts with STX4A. Phosphorylated on Ser-99 by PKB/AKT2 after insulin treatment. Phosphorylation on Ser-99 abolishes the interaction with STX4A.

It localises to the cytoplasm. In terms of biological role, plays a role in the translocation of transport vesicles from the cytoplasm to the plasma membrane. Inhibits the translocation of SLC2A4 from intracellular vesicles to the plasma membrane by STX4A binding and preventing the interaction between STX4A and VAMP2. Stimulation with insulin disrupts the interaction with STX4A, leading to increased levels of SLC2A4 at the plasma membrane. May also play a role in the regulation of insulin release by pancreatic beta cells after stimulation by glucose. This chain is Syntaxin-binding protein 4 (STXBP4), found in Homo sapiens (Human).